A 123-amino-acid chain; its full sequence is Class II hydrophobin 2 (123 aa).

The signal sequence occupies residues 1–16 (MRSFLVIATLAVGAFG). Intrachain disulfides connect Cys22–Cys70, Cys32–Cys61, Cys33–Cys45, and Cys71–Cys82.

Belongs to the cerato-ulmin hydrophobin family. As to quaternary structure, homodimer. Homodimers further self-assemble to form highly ordered films at water-air interfaces through intermolecular interactions.

Its subcellular location is the secreted. It is found in the cell wall. In terms of biological role, aerial growth, conidiation, and dispersal of filamentous fungi in the environment rely upon a capability of their secreting small amphipathic proteins called hydrophobins (HPBs) with low sequence identity. Class I can self-assemble into an outermost layer of rodlet bundles on aerial cell surfaces, conferring cellular hydrophobicity that supports fungal growth, development and dispersal; whereas Class II form highly ordered films at water-air interfaces through intermolecular interactions but contribute nothing to the rodlet structure. Hyd2 is a class II hydrophobin that plays probably a role in intraspecific signaling or hyphal fusion. Not necessary for root adhesion and colonization. Might play an essential role since no deletion mutants could be obtained. This chain is Class II hydrophobin 2, found in Bionectria ochroleuca (Gliocladium roseum).